A 266-amino-acid chain; its full sequence is GTP cyclohydrolase FolE2 (266 aa).

It belongs to the GTP cyclohydrolase IV family.

It carries out the reaction GTP + H2O = 7,8-dihydroneopterin 3'-triphosphate + formate + H(+). Its pathway is cofactor biosynthesis; 7,8-dihydroneopterin triphosphate biosynthesis; 7,8-dihydroneopterin triphosphate from GTP: step 1/1. Functionally, converts GTP to 7,8-dihydroneopterin triphosphate. This chain is GTP cyclohydrolase FolE2, found in Methylobacillus flagellatus (strain ATCC 51484 / DSM 6875 / VKM B-1610 / KT).